The following is a 57-amino-acid chain: DNA-directed RNA polymerase subunit Rpo6 (57 aa).

This sequence belongs to the archaeal Rpo6/eukaryotic RPB6 RNA polymerase subunit family. Part of the RNA polymerase complex.

It is found in the cytoplasm. The catalysed reaction is RNA(n) + a ribonucleoside 5'-triphosphate = RNA(n+1) + diphosphate. DNA-dependent RNA polymerase (RNAP) catalyzes the transcription of DNA into RNA using the four ribonucleoside triphosphates as substrates. The protein is DNA-directed RNA polymerase subunit Rpo6 of Pyrococcus furiosus (strain ATCC 43587 / DSM 3638 / JCM 8422 / Vc1).